The chain runs to 222 residues: ATP-dependent dethiobiotin synthetase BioD (222 aa).

12–17 is an ATP binding site; it reads DVGKTI. A Mg(2+)-binding site is contributed by Thr16. Residue Lys37 is part of the active site. Thr41 contributes to the substrate binding site. ATP contacts are provided by residues Asp49, 107-110, 167-168, and 197-199; these read EGAG, GS, and AEG. Positions 49 and 107 each coordinate Mg(2+).

Belongs to the dethiobiotin synthetase family. In terms of assembly, homodimer. The cofactor is Mg(2+).

The protein localises to the cytoplasm. It catalyses the reaction (7R,8S)-7,8-diammoniononanoate + CO2 + ATP = (4R,5S)-dethiobiotin + ADP + phosphate + 3 H(+). The protein operates within cofactor biosynthesis; biotin biosynthesis; biotin from 7,8-diaminononanoate: step 1/2. Functionally, catalyzes a mechanistically unusual reaction, the ATP-dependent insertion of CO2 between the N7 and N8 nitrogen atoms of 7,8-diaminopelargonic acid (DAPA, also called 7,8-diammoniononanoate) to form a ureido ring. The polypeptide is ATP-dependent dethiobiotin synthetase BioD (Corynebacterium diphtheriae (strain ATCC 700971 / NCTC 13129 / Biotype gravis)).